The chain runs to 248 residues: Inner membrane protein pE248R (248 aa).

Gly2 carries the N-myristoyl glycine; by host lipid modification. Over 2–199 (GGSTSKNSFK…ADAISAVFKN (198 aa)) the chain is Cytoplasmic. A helical membrane pass occupies residues 200 to 220 (IMVAAVVIVLIIVGFIAVFYF). Residues 221–248 (LHSRHRHEEEEEAEPLISNKVLKNAAVS) are Extracellular-facing.

Belongs to the asfivirus E248R family. In terms of assembly, interacts with A151R.

The protein localises to the host membrane. The protein resides in the virion membrane. Essential for viral fusion with host endosomal membrane and core release. The protein is Inner membrane protein pE248R of African swine fever virus (strain Badajoz 1971 Vero-adapted) (Ba71V).